The following is a 352-amino-acid chain: Glycerol-3-phosphate dehydrogenase [NAD(P)+] (352 aa).

Positions 11, 12, 32, and 105 each coordinate NADPH. Sn-glycerol 3-phosphate contacts are provided by lysine 105, glycine 133, and serine 135. An NADPH-binding site is contributed by alanine 137. Residues lysine 188, aspartate 241, serine 251, arginine 252, and asparagine 253 each coordinate sn-glycerol 3-phosphate. Residue lysine 188 is the Proton acceptor of the active site. Arginine 252 is a binding site for NADPH. NADPH is bound by residues valine 276 and glutamate 278.

The protein belongs to the NAD-dependent glycerol-3-phosphate dehydrogenase family.

Its subcellular location is the cytoplasm. It catalyses the reaction sn-glycerol 3-phosphate + NAD(+) = dihydroxyacetone phosphate + NADH + H(+). The enzyme catalyses sn-glycerol 3-phosphate + NADP(+) = dihydroxyacetone phosphate + NADPH + H(+). It participates in membrane lipid metabolism; glycerophospholipid metabolism. Its function is as follows. Catalyzes the reduction of the glycolytic intermediate dihydroxyacetone phosphate (DHAP) to sn-glycerol 3-phosphate (G3P), the key precursor for phospholipid synthesis. The protein is Glycerol-3-phosphate dehydrogenase [NAD(P)+] of Desulfitobacterium hafniense (strain Y51).